Consider the following 454-residue polypeptide: UPF0210 protein Mhun_2657 (454 aa).

Belongs to the UPF0210 family.

The sequence is that of UPF0210 protein Mhun_2657 from Methanospirillum hungatei JF-1 (strain ATCC 27890 / DSM 864 / NBRC 100397 / JF-1).